Consider the following 296-residue polypeptide: Acetyl-coenzyme A carboxylase carboxyl transferase subunit beta (296 aa).

Positions 25 to 294 constitute a CoA carboxyltransferase N-terminal domain; it reads LWIKDPSTGE…NSDAPAPPEA (270 aa).

It belongs to the AccD/PCCB family. Acetyl-CoA carboxylase is a heterohexamer composed of biotin carboxyl carrier protein (AccB), biotin carboxylase (AccC) and two subunits each of ACCase subunit alpha (AccA) and ACCase subunit beta (AccD).

It is found in the cytoplasm. The enzyme catalyses N(6)-carboxybiotinyl-L-lysyl-[protein] + acetyl-CoA = N(6)-biotinyl-L-lysyl-[protein] + malonyl-CoA. It participates in lipid metabolism; malonyl-CoA biosynthesis; malonyl-CoA from acetyl-CoA: step 1/1. In terms of biological role, component of the acetyl coenzyme A carboxylase (ACC) complex. Biotin carboxylase (BC) catalyzes the carboxylation of biotin on its carrier protein (BCCP) and then the CO(2) group is transferred by the transcarboxylase to acetyl-CoA to form malonyl-CoA. This Brucella ovis (strain ATCC 25840 / 63/290 / NCTC 10512) protein is Acetyl-coenzyme A carboxylase carboxyl transferase subunit beta.